Reading from the N-terminus, the 113-residue chain is Protein FMC1 homolog (113 aa).

The interval 94–113 (SAGLVGLQLPHQPGGKGWEP) is disordered.

This sequence belongs to the FMC1 family. Interacts with ATPAF2.

The protein resides in the mitochondrion. In terms of biological role, plays a role in the assembly/stability of the mitochondrial membrane ATP synthase (F(1)F(0) ATP synthase or Complex V). The chain is Protein FMC1 homolog from Rattus norvegicus (Rat).